The primary structure comprises 577 residues: Leucine-rich repeat protein soc-2 homolog (577 aa).

Composition is skewed to basic and acidic residues over residues 1–10 and 33–48; these read MRRTKGRTDS and STAHKSDKKHDPEAKK. Residues 1–71 are disordered; sequence MRRTKGRTDS…PTVKKRSTPS (71 aa). LRR repeat units lie at residues 87-109, 110-131, 133-155, 156-177, 179-201, 202-223, 225-246, 248-269, 271-292, 294-315, 318-339, 342-363, 366-387, 389-410, 412-434, 435-456, 458-479, 481-502, 504-526, and 528-549; these read GATRLDLSKAAVTVLPKELKELT, SLRELYLYGNRIAVLPPEVGLL, NLETLALSENNLTTLPDNLVKLT, KLKVLDLRHNKIKEIPDVIYKL, TLTTLYLRFNRISVVESGIGNLK, LLERLSLRENKIKILPRVIGQL, HLVTLDISHNHIENLPAEIGNC, HMTSLDLQHNDIPSLPDSIGRL, AMTRLGLRYNQLSSLPDSLANC, GIDEFNIEGNNIAELPEKLLSS, NLTSLTLSRNKFEVFPAGPPKQ, QVNTFIMEHNRMQKIPFGVFNK, YLSKLNVKDNQLTSLPLDFGSW, SLVELNVATNQISKLPEDIQWL, NLEVLILSNNLLKKLPRGIGALR, KLRVLDIEENKLESIPTEIEYL, SLERLVLQSNCLGSLPRSIGYL, SVTYLSVGENELVSVPQEIGNM, SLEQLYLNDNENLQSLPYELVLC, and SLQIMSIENCPLSALPSQIVAG.

This sequence belongs to the SHOC2 family.

In terms of biological role, acts as a Ras effector and participates in MAPK pathway activation. Probably acts as a scaffolding protein in a protein phosphatase complex that specifically dephosphorylates Raf kinase and stimulate Raf activity at specialized signaling complexes upon Ras activation. This chain is Leucine-rich repeat protein soc-2 homolog, found in Nematostella vectensis (Starlet sea anemone).